The sequence spans 248 residues: Ubiquinone/menaquinone biosynthesis C-methyltransferase UbiE (248 aa).

2 residues coordinate S-adenosyl-L-methionine: serine 68 and aspartate 92.

Belongs to the class I-like SAM-binding methyltransferase superfamily. MenG/UbiE family.

The enzyme catalyses a 2-demethylmenaquinol + S-adenosyl-L-methionine = a menaquinol + S-adenosyl-L-homocysteine + H(+). It catalyses the reaction a 2-methoxy-6-(all-trans-polyprenyl)benzene-1,4-diol + S-adenosyl-L-methionine = a 5-methoxy-2-methyl-3-(all-trans-polyprenyl)benzene-1,4-diol + S-adenosyl-L-homocysteine + H(+). It participates in quinol/quinone metabolism; menaquinone biosynthesis; menaquinol from 1,4-dihydroxy-2-naphthoate: step 2/2. Its pathway is cofactor biosynthesis; ubiquinone biosynthesis. In terms of biological role, methyltransferase required for the conversion of demethylmenaquinol (DMKH2) to menaquinol (MKH2) and the conversion of 2-polyprenyl-6-methoxy-1,4-benzoquinol (DDMQH2) to 2-polyprenyl-3-methyl-6-methoxy-1,4-benzoquinol (DMQH2). This chain is Ubiquinone/menaquinone biosynthesis C-methyltransferase UbiE, found in Rickettsia bellii (strain OSU 85-389).